A 762-amino-acid chain; its full sequence is Primary amine oxidase, lung isozyme (762 aa).

The N-terminal stretch at 1-16 (MFIFIFLSLWTLLVMG) is a signal peptide. A disordered region spans residues 23–54 (GSEEGVGKQCHPSLPPRCPSRSPSDQPWTHPD). A glycan (N-linked (GlcNAc...) asparagine) is linked at Asn136. Cysteines 197 and 198 form a disulfide. A glycan (O-linked (GalNAc...) threonine) is linked at Thr211. 2 N-linked (GlcNAc...) asparagine glycosylation sites follow: Asn231 and Asn293. Residue 383-393 (YMDACFGMGKF) participates in substrate binding. Asp385 acts as the Proton acceptor in catalysis. A disulfide bridge connects residues Cys403 and Cys429. 467 to 472 (LLNYDY) is a substrate binding site. The active-site Schiff-base intermediate with substrate; via topaquinone is the Tyr470. At Tyr470 the chain carries 2',4',5'-topaquinone. The Cu cation site is built by His519 and His521. 4 residues coordinate Ca(2+): Asp528, Leu529, Asp530, and Glu571. 577–584 (PLGGGSPR) is a heparin binding site. N-linked (GlcNAc...) asparagine glycosylation occurs at Asn617. Phe662 and Asn664 together coordinate Ca(2+). The N-linked (GlcNAc...) asparagine glycan is linked to Asn665. Positions 666, 672, and 673 each coordinate Ca(2+). His683 contacts Cu cation. A disulfide bridge connects residues Cys733 and Cys740.

Belongs to the copper/topaquinone oxidase family. As to quaternary structure, homodimer; disulfide-linked. Requires Cu cation as cofactor. It depends on Ca(2+) as a cofactor. The cofactor is L-topaquinone. Post-translationally, topaquinone (TPQ) is generated by copper-dependent autoxidation of a specific tyrosyl residue. As to expression, expressed in lung, spleen, heart and kidney.

The protein localises to the secreted. It localises to the extracellular space. The catalysed reaction is a primary methyl amine + O2 + H2O = an aldehyde + H2O2 + NH4(+). The polypeptide is Primary amine oxidase, lung isozyme (Bos taurus (Bovine)).